The sequence spans 138 residues: Acidic phospholipase A2 Cvv-E6h (138 aa).

The first 16 residues, Met-1–Gly-16, serve as a signal peptide directing secretion. Disulfide bonds link Cys-42/Cys-131, Cys-44/Cys-60, Cys-59/Cys-111, Cys-65/Cys-138, Cys-66/Cys-104, Cys-73/Cys-97, and Cys-91/Cys-102. Ca(2+) contacts are provided by Tyr-43, Gly-45, and Gly-47. His-63 is an active-site residue. Asp-64 contributes to the Ca(2+) binding site. Asp-105 is an active-site residue.

The protein belongs to the phospholipase A2 family. Group II subfamily. D49 sub-subfamily. It depends on Ca(2+) as a cofactor. Expressed by the venom gland.

The protein localises to the secreted. The catalysed reaction is a 1,2-diacyl-sn-glycero-3-phosphocholine + H2O = a 1-acyl-sn-glycero-3-phosphocholine + a fatty acid + H(+). Its function is as follows. Snake venom phospholipase A2 (PLA2) that shows very low inhibition of ADP-induced platelet aggregation in platelet-rich plasma of human, rabbit and guinea pig. In vivo, shows efficient edema-inducing activities in rat paws. PLA2 catalyzes the calcium-dependent hydrolysis of the 2-acyl groups in 3-sn-phosphoglycerides. In Crotalus viridis viridis (Prairie rattlesnake), this protein is Acidic phospholipase A2 Cvv-E6h.